Consider the following 352-residue polypeptide: Long-chain-alcohol O-fatty-acyltransferase (352 aa).

A run of 8 helical transmembrane segments spans residues 13–33 (VWIS…VAPH), 34–54 (GGAL…FLPL), 67–87 (LYLV…LGPL), 128–148 (KVVL…IYEF), 155–175 (FVIS…TLAA), 239–259 (VAGA…VFFF), 267–287 (SWEV…EMVV), and 303–323 (GALT…PQLV).

The protein belongs to the wax synthase family.

The protein resides in the microsome membrane. The enzyme catalyses a long chain fatty alcohol + a fatty acyl-CoA = a wax ester + CoA. Catalyzes the final step in the synthesis of long-chain linear esters (waxes). Has activity with both saturated and monounsaturated acyl-CoA ranging from 14 to 24 carbons in length, but C20:1 acyl-CoA is the preferred substrate. The protein is Long-chain-alcohol O-fatty-acyltransferase of Simmondsia chinensis (Jojoba).